Consider the following 194-residue polypeptide: dTTP/UTP pyrophosphatase (194 aa).

Residue aspartate 73 is the Proton acceptor of the active site.

It belongs to the Maf family. YhdE subfamily. A divalent metal cation serves as cofactor.

It localises to the cytoplasm. The enzyme catalyses dTTP + H2O = dTMP + diphosphate + H(+). The catalysed reaction is UTP + H2O = UMP + diphosphate + H(+). Its function is as follows. Nucleoside triphosphate pyrophosphatase that hydrolyzes dTTP and UTP. May have a dual role in cell division arrest and in preventing the incorporation of modified nucleotides into cellular nucleic acids. This Clostridium botulinum (strain ATCC 19397 / Type A) protein is dTTP/UTP pyrophosphatase.